The chain runs to 256 residues: Major prion protein (256 aa).

The N-terminal stretch at Met-1–Cys-24 is a signal peptide. The tract at residues Lys-25 to Ala-233 is interaction with GRB2, ERI3 and SYN1. Residues Pro-28–Thr-110 are disordered. 5 consecutive repeat copies span residues Pro-54 to Gln-62, Pro-63 to Gln-70, Pro-71 to Gln-78, Pro-79 to Gln-86, and Pro-87 to Gln-95. Positions Pro-54–Gln-95 are 5 X 8 AA tandem repeats of P-H-G-G-G-W-G-Q. The span at Gln-55–Gly-97 shows a compositional bias: gly residues. Cu(2+) contacts are provided by His-64, Gly-65, Gly-66, His-72, Gly-73, Gly-74, His-80, Gly-81, Gly-82, His-88, Gly-90, and Gly-91. Cys-182 and Cys-217 form a disulfide bridge. N-linked (GlcNAc...) asparagine glycans are attached at residues Asn-184 and Asn-200. Ala-233 is lipidated: GPI-anchor amidated alanine. The propeptide at Ser-234–Gly-256 is removed in mature form.

The protein belongs to the prion family. Monomer and homodimer. Has a tendency to aggregate into amyloid fibrils containing a cross-beta spine, formed by a steric zipper of superposed beta-strands. Soluble oligomers may represent an intermediate stage on the path to fibril formation. Copper binding may promote oligomerization. Interacts with GRB2, APP, ERI3/PRNPIP and SYN1. Mislocalized cytosolically exposed PrP interacts with MGRN1; this interaction alters MGRN1 subcellular location and causes lysosomal enlargement. Interacts with KIAA1191.

The protein localises to the cell membrane. It localises to the golgi apparatus. Functionally, its primary physiological function is unclear. Has cytoprotective activity against internal or environmental stresses. May play a role in neuronal development and synaptic plasticity. May be required for neuronal myelin sheath maintenance. May play a role in iron uptake and iron homeostasis. Soluble oligomers are toxic to cultured neuroblastoma cells and induce apoptosis (in vitro). Association with GPC1 (via its heparan sulfate chains) targets PRNP to lipid rafts. Also provides Cu(2+) or Zn(2+) for the ascorbate-mediated GPC1 deaminase degradation of its heparan sulfate side chains. The protein is Major prion protein (PRNP) of Budorcas taxicolor (Golden takin).